The primary structure comprises 152 residues: Small ribosomal subunit protein bS16 (152 aa).

A disordered region spans residues 84 to 152 (WKWEASNNPQ…EAAAEEEKSE (69 aa)). Residues 97–123 (PGQKAKELAAEKAEKEADRKAAEEEAK) are compositionally biased toward basic and acidic residues. Residues 124-144 (AAAAAPAAEEAPAEEAPAAEA) show a composition bias toward low complexity.

This sequence belongs to the bacterial ribosomal protein bS16 family.

This is Small ribosomal subunit protein bS16 from Maricaulis maris (strain MCS10) (Caulobacter maris).